Here is a 340-residue protein sequence, read N- to C-terminus: HTH-type transcriptional regulator VirS (340 aa).

Residues 236 to 334 form the HTH araC/xylS-type domain; it reads ERVVGLARRL…GMTPRQYRAY (99 aa). DNA-binding regions (H-T-H motif) lie at residues 254–275 and 301–324; these read EAIA…AAEG and LSQI…RRWF.

In terms of processing, phosphorylated by PknK. Phosphorylation increases affinity for the mymA promoter.

In terms of biological role, regulates the expression of the mymA operon. The chain is HTH-type transcriptional regulator VirS (virS) from Mycobacterium tuberculosis (strain CDC 1551 / Oshkosh).